The chain runs to 429 residues: Adenosylhomocysteinase (429 aa).

Positions 64, 136, and 161 each coordinate substrate. 162 to 164 (TTT) is a binding site for NAD(+). The substrate site is built by lysine 191 and aspartate 195. Residues asparagine 196, 225-230 (GYGWCG), glutamate 248, asparagine 283, 304-306 (SGH), and asparagine 351 contribute to the NAD(+) site.

This sequence belongs to the adenosylhomocysteinase family. NAD(+) is required as a cofactor.

The protein localises to the cytoplasm. It catalyses the reaction S-adenosyl-L-homocysteine + H2O = L-homocysteine + adenosine. Its pathway is amino-acid biosynthesis; L-homocysteine biosynthesis; L-homocysteine from S-adenosyl-L-homocysteine: step 1/1. May play a key role in the regulation of the intracellular concentration of adenosylhomocysteine. The chain is Adenosylhomocysteinase from Thermosynechococcus vestitus (strain NIES-2133 / IAM M-273 / BP-1).